The following is an 89-amino-acid chain: Small ribosomal subunit protein uS15 (89 aa).

The span at 1-11 shows a compositional bias: basic and acidic residues; the sequence is MSIAAERKAEV. The interval 1 to 25 is disordered; the sequence is MSIAAERKAEVIKTSANKPGDTGSP.

Belongs to the universal ribosomal protein uS15 family. In terms of assembly, part of the 30S ribosomal subunit. Forms a bridge to the 50S subunit in the 70S ribosome, contacting the 23S rRNA.

In terms of biological role, one of the primary rRNA binding proteins, it binds directly to 16S rRNA where it helps nucleate assembly of the platform of the 30S subunit by binding and bridging several RNA helices of the 16S rRNA. Forms an intersubunit bridge (bridge B4) with the 23S rRNA of the 50S subunit in the ribosome. The protein is Small ribosomal subunit protein uS15 of Nitrobacter winogradskyi (strain ATCC 25391 / DSM 10237 / CIP 104748 / NCIMB 11846 / Nb-255).